The chain runs to 138 residues: Superoxide dismutase [Mn] (138 aa).

Positions 1, 49, 133, and 137 each coordinate Mn(2+).

This sequence belongs to the iron/manganese superoxide dismutase family. The cofactor is Mn(2+).

The enzyme catalyses 2 superoxide + 2 H(+) = H2O2 + O2. Functionally, destroys superoxide anion radicals which are normally produced within the cells and which are toxic to biological systems. In Mycobacteroides chelonae (Mycobacterium chelonae), this protein is Superoxide dismutase [Mn] (sodA).